The following is a 207-amino-acid chain: Adenine phosphoribosyltransferase (207 aa).

The tract at residues 1 to 33 is disordered; that stretch reads MRPAKPPQSKERKRSKSLTSADHDNSPQRAETA.

The protein belongs to the purine/pyrimidine phosphoribosyltransferase family. In terms of assembly, homodimer.

The protein resides in the cytoplasm. It catalyses the reaction AMP + diphosphate = 5-phospho-alpha-D-ribose 1-diphosphate + adenine. It participates in purine metabolism; AMP biosynthesis via salvage pathway; AMP from adenine: step 1/1. Its function is as follows. Catalyzes a salvage reaction resulting in the formation of AMP, that is energically less costly than de novo synthesis. This is Adenine phosphoribosyltransferase from Corynebacterium jeikeium (strain K411).